A 563-amino-acid polypeptide reads, in one-letter code: Zinc finger protein 503 (563 aa).

Residues 1–10 are compositionally biased toward polar residues; sequence MITSPSASRN. Disordered regions lie at residues 1–48 and 101–226; these read MITS…PLRQ and SQIG…TSVS. Low complexity-rich tracts occupy residues 19–33 and 112–122; these read SSSSSSRNNSSAVAS and SKLSSVTSNGS. Residues 174 to 194 are compositionally biased toward polar residues; the sequence is ATCQPFTPRTGSPNSSTSASP. Residues 199-211 are compositionally biased toward basic and acidic residues; that stretch reads GKGERDEKKDSDC. Positions 212–226 are enriched in polar residues; it reads NKNCSSDGSAPTSVS. The segment at 431-459 adopts a C2H2-type zinc-finger fold; sequence HVCNWVSANGPCDKRFSSSEELLNHLRTH.

This sequence belongs to the Elbow/Noc family. As to quaternary structure, interacts with nlz1.

It is found in the nucleus. Required for segmental gene expression during hindbrain development. May function as a transcriptional repressor. This is Zinc finger protein 503 (znf503) from Danio rerio (Zebrafish).